A 292-amino-acid polypeptide reads, in one-letter code: Formamidopyrimidine-DNA glycosylase (292 aa).

Residue Pro2 is the Schiff-base intermediate with DNA of the active site. Glu3 acts as the Proton donor in catalysis. Lys58 functions as the Proton donor; for beta-elimination activity in the catalytic mechanism. 3 residues coordinate DNA: His103, Arg122, and Lys165. An FPG-type zinc finger spans residues 256 to 292; the sequence is RVYDRALHPCPTPGCKGEISRITQGGRSSFFCSMCQK. Arg282 acts as the Proton donor; for delta-elimination activity in catalysis.

It belongs to the FPG family. In terms of assembly, monomer. Zn(2+) serves as cofactor.

The catalysed reaction is Hydrolysis of DNA containing ring-opened 7-methylguanine residues, releasing 2,6-diamino-4-hydroxy-5-(N-methyl)formamidopyrimidine.. It catalyses the reaction 2'-deoxyribonucleotide-(2'-deoxyribose 5'-phosphate)-2'-deoxyribonucleotide-DNA = a 3'-end 2'-deoxyribonucleotide-(2,3-dehydro-2,3-deoxyribose 5'-phosphate)-DNA + a 5'-end 5'-phospho-2'-deoxyribonucleoside-DNA + H(+). Involved in base excision repair of DNA damaged by oxidation or by mutagenic agents. Acts as a DNA glycosylase that recognizes and removes damaged bases. Has a preference for oxidized purines, such as 7,8-dihydro-8-oxoguanine (8-oxoG). Has AP (apurinic/apyrimidinic) lyase activity and introduces nicks in the DNA strand. Cleaves the DNA backbone by beta-delta elimination to generate a single-strand break at the site of the removed base with both 3'- and 5'-phosphates. The chain is Formamidopyrimidine-DNA glycosylase from Methylocella silvestris (strain DSM 15510 / CIP 108128 / LMG 27833 / NCIMB 13906 / BL2).